The sequence spans 464 residues: Cysteine--tRNA ligase (464 aa).

Cys32 serves as a coordination point for Zn(2+). The 'HIGH' region signature appears at Val34–His44. Zn(2+) contacts are provided by Cys213, His238, and Glu242. The 'KMSKS' region motif lies at Lys270–Ser274. Lys273 is an ATP binding site.

This sequence belongs to the class-I aminoacyl-tRNA synthetase family. As to quaternary structure, monomer. Requires Zn(2+) as cofactor.

It localises to the cytoplasm. It carries out the reaction tRNA(Cys) + L-cysteine + ATP = L-cysteinyl-tRNA(Cys) + AMP + diphosphate. This chain is Cysteine--tRNA ligase, found in Francisella tularensis subsp. tularensis (strain SCHU S4 / Schu 4).